Consider the following 158-residue polypeptide: Curculin-2 (158 aa).

A signal peptide spans 1 to 22; the sequence is MAAKFLLTILVTFAAVASLGMA. Residues 23–131 enclose the Bulb-type lectin domain; the sequence is DSVLLSGQTL…VLWPLGLNGC (109 aa). A disulfide bridge connects residues Cys-51 and Cys-74. The N-linked (GlcNAc...) asparagine glycan is linked to Asn-103. Positions 136–158 are excised as a propeptide; it reads GEITVAKDSTEPQHEDIKMVINN.

Heterodimer with curculin-1; Disulfide-linked.

Its function is as follows. Taste-modifying protein; sweet-tasting. After curculin, water elicits a sweet taste, and sour substances induce a stronger sense of sweetness. The polypeptide is Curculin-2 (Molineria latifolia (Lumbah)).